The primary structure comprises 98 residues: Cystatin-B (98 aa).

An N-acetylmethionine modification is found at Met1. The Secondary area of contact signature appears at 46–50 (QIVAG).

This sequence belongs to the cystatin family. As to expression, widely expressed. Highest expression in heart, liver and kidney. Lower levels in brain, lung and skeletal muscle. Lowest levels in spleen and testis.

Its subcellular location is the cytoplasm. In terms of biological role, this is an intracellular thiol proteinase inhibitor. This chain is Cystatin-B (Cstb), found in Mus musculus (Mouse).